Here is a 347-residue protein sequence, read N- to C-terminus: Phosphoribosylformylglycinamidine cyclo-ligase (347 aa).

The protein belongs to the AIR synthase family.

The protein resides in the cytoplasm. The enzyme catalyses 2-formamido-N(1)-(5-O-phospho-beta-D-ribosyl)acetamidine + ATP = 5-amino-1-(5-phospho-beta-D-ribosyl)imidazole + ADP + phosphate + H(+). It functions in the pathway purine metabolism; IMP biosynthesis via de novo pathway; 5-amino-1-(5-phospho-D-ribosyl)imidazole from N(2)-formyl-N(1)-(5-phospho-D-ribosyl)glycinamide: step 2/2. The protein is Phosphoribosylformylglycinamidine cyclo-ligase of Bacillus cytotoxicus (strain DSM 22905 / CIP 110041 / 391-98 / NVH 391-98).